A 297-amino-acid polypeptide reads, in one-letter code: MADTSMYQGSLTALVTPMHTDGRIDFDVSAKLIERQIEAGTTALIPAGTTGESPTLSHEEHGRVVAHCVETANGRVRVMAGAGSNSTSEAVLMAKHAHSVGADSVLVVVPYYNKPTQEGLYRHFMTIADATPLPMFLYCIPGRSVVDISVATMARLAEHPNIVGTKDATANMARPIAVRRAVDKPFNQLSGDDNSVLSFLAAGGDGCIGVTSNVVPHLCADMHLAWQEGRIEDAIAIQDHLTPLHDAMFMESNPGPVKYALSRLGLCNATLRLPLVEPQEETRRAIDAALRSLELLD.

Residue T50 coordinates pyruvate. The Proton donor/acceptor role is filled by Y138. K166 acts as the Schiff-base intermediate with substrate in catalysis. Pyruvate is bound at residue I208.

The protein belongs to the DapA family. Homotetramer; dimer of dimers.

It localises to the cytoplasm. It carries out the reaction L-aspartate 4-semialdehyde + pyruvate = (2S,4S)-4-hydroxy-2,3,4,5-tetrahydrodipicolinate + H2O + H(+). The protein operates within amino-acid biosynthesis; L-lysine biosynthesis via DAP pathway; (S)-tetrahydrodipicolinate from L-aspartate: step 3/4. Functionally, catalyzes the condensation of (S)-aspartate-beta-semialdehyde [(S)-ASA] and pyruvate to 4-hydroxy-tetrahydrodipicolinate (HTPA). The polypeptide is 4-hydroxy-tetrahydrodipicolinate synthase (Gluconobacter oxydans (strain 621H) (Gluconobacter suboxydans)).